Here is a 195-residue protein sequence, read N- to C-terminus: MPKLGMREIRRAQLIDATLRSIDEAGLSGTTLASVAQRANISTGIVSHYFGDKDGLLEATMRHVLRDLWAATARHRAAASDAPRARLRAVVAANFDDTQISAPVMKTWLAFWSQSMHEPTLRRLQHVNTRRLYSNLCAEFAKALPPARAREAASGLAALIDGLWLRGALAGGPFDTKAALKLANDYIDLLLAPRA.

An HTH tetR-type domain is found at 8–68; sequence EIRRAQLIDA…ATMRHVLRDL (61 aa). The H-T-H motif DNA-binding region spans 31–50; that stretch reads TLASVAQRANISTGIVSHYF.

It functions in the pathway amine and polyamine biosynthesis; betaine biosynthesis via choline pathway [regulation]. Functionally, repressor involved in the biosynthesis of the osmoprotectant glycine betaine. It represses transcription of the choline transporter BetT and the genes of BetAB involved in the synthesis of glycine betaine. This is HTH-type transcriptional regulator BetI from Burkholderia thailandensis (strain ATCC 700388 / DSM 13276 / CCUG 48851 / CIP 106301 / E264).